A 323-amino-acid polypeptide reads, in one-letter code: MIVKFEKFEKLKKPLVIFLMGPTACNKSLLAMTLKDILPIELVSVDSALIYRGMDIGTAKPSNMELLKYPHFLVNIRDPLQTYSVGEFYKDILKIIDYIHSINKVPLLVGGTMFYFKILLTGGLSNLPSSNDNIRKYLLTLLQKKSKFFLFNQLKSIDPISAERIHFNDVQRVLRALEVFFISGKTLTELCRLKNFVSPYNIVQFSLMPESKEWLFNKITIRFKKMLSCGFEYEVKKLFNRGDLHKNLPSIRCVGYRQMWDYFMHNLTYDDMICESLKATKRLVKSQLTWLNNWKKLNVLSSSDTLKNLITKIISVINANIFV.

21-28 contacts ATP; sequence GPTACNKS. 23-28 provides a ligand contact to substrate; it reads TACNKS. 3 interaction with substrate tRNA regions span residues 46-49, 171-175, and 252-257; these read DSAL, QRVLR, and RCVGYR.

This sequence belongs to the IPP transferase family. As to quaternary structure, monomer. Requires Mg(2+) as cofactor.

The catalysed reaction is adenosine(37) in tRNA + dimethylallyl diphosphate = N(6)-dimethylallyladenosine(37) in tRNA + diphosphate. Catalyzes the transfer of a dimethylallyl group onto the adenine at position 37 in tRNAs that read codons beginning with uridine, leading to the formation of N6-(dimethylallyl)adenosine (i(6)A). The chain is tRNA dimethylallyltransferase from Buchnera aphidicola subsp. Baizongia pistaciae (strain Bp).